The chain runs to 431 residues: TDP-daunosamine transferase DnrS (431 aa).

Positions 1–23 (MKVLVTAFAMDAHFNGVVPLAWA) are cleaved as a signal peptide.

Belongs to the glycosyltransferase 28 family.

The enzyme catalyses dTDP-beta-L-daunosamine + epsilon-rhodomycinone = rhodomycin D + dTDP + H(+). Its pathway is antibiotic biosynthesis; daunorubicin biosynthesis. It functions in the pathway antibiotic biosynthesis; carminomycin biosynthesis. Involved in the biosynthesis of the anthracyclines carminomycin and daunorubicin (daunomycin) which are aromatic polyketide antibiotics that exhibit high cytotoxicity and are widely applied in the chemotherapy of a variety of cancers. Catalyzes the addition of the TDP activated glycoside, L-daunosamine-TDP (2,3,6-trideoxy-3-aminohexose-TDP) at position C-7 of epsilon-rhodomycinone to yield rhodomycin D. Glycosylation is a prerequisite for biological activity of anthracyclines and requires DnrQ which seems to act as an activator. This chain is TDP-daunosamine transferase DnrS (dnrS), found in Streptomyces peucetius.